A 285-amino-acid chain; its full sequence is Golgi to ER traffic protein 2 (285 aa).

Positions 1 to 10 are enriched in basic and acidic residues; sequence MSELTEAEKR. The interval 1-71 is disordered; it reads MSELTEAEKR…HSATPDIKED (71 aa). Ser2 is subject to N-acetylserine. The Cytoplasmic segment spans residues 2–148; that stretch reads SELTEAEKRR…LDYHDYLLNR (147 aa). The span at 11–20 shows a compositional bias: basic residues; it reads RLLRERRQKK. Residues 24–42 are compositionally biased toward polar residues; it reads GGASSRLNKITGQASSHLN. Ser45 carries the phosphoserine modification. Over residues 49–60 the composition is skewed to low complexity; that stretch reads APSAAKATPPAS. Residues 149-169 form a helical membrane-spanning segment; sequence LKAWTILVKWVFFLLPYLYLI. The Lumenal segment spans residues 170–196; it reads TRPNSSVWPAYAFTQSAWFAPLRNPSN. N-linked (GlcNAc...) asparagine glycosylation is found at Asn173 and Asn196. A helical transmembrane segment spans residues 197 to 216; the sequence is FTRIFATFEFLSISIYYQLL. At 217–263 the chain is on the cytoplasmic side; sequence KNVEHKSKIKNLQDTNKLVKLVSLVPEGVIPVANLKGKLITLLQYWD. A helical transmembrane segment spans residues 264–284; sequence LLSMLITDISFVLIVLGLLTY. Position 285 (Leu285) is a topological domain, lumenal.

The protein belongs to the GET2 family. As to quaternary structure, component of the Golgi to ER traffic (GET) complex, which is composed of GET1, GET2 and GET3. Within the complex, GET1 and GET2 form a heterotetramer which is stabilized by phosphatidylinositol binding and which binds to the GET3 homodimer.

The protein resides in the endoplasmic reticulum membrane. It localises to the golgi apparatus membrane. Functionally, required for the post-translational delivery of tail-anchored (TA) proteins to the endoplasmic reticulum. Together with GET1, acts as a membrane receptor for soluble GET3, which recognizes and selectively binds the transmembrane domain of TA proteins in the cytosol. The GET complex cooperates with the HDEL receptor ERD2 to mediate the ATP-dependent retrieval of resident ER proteins that contain a C-terminal H-D-E-L retention signal from the Golgi to the ER. Involved in DNA replication and DNA damage response and also in cell wall function. The sequence is that of Golgi to ER traffic protein 2 from Saccharomyces cerevisiae (strain YJM789) (Baker's yeast).